Reading from the N-terminus, the 369-residue chain is tRNA-specific 2-thiouridylase MnmA (369 aa).

ATP is bound by residues 10 to 17 (GLSGGVDS) and Leu36. Cys97 functions as the Nucleophile in the catalytic mechanism. A disulfide bridge connects residues Cys97 and Cys196. Gly122 provides a ligand contact to ATP. Positions 146–148 (KDQ) are interaction with tRNA. The active-site Cysteine persulfide intermediate is Cys196. Residues 301 to 302 (RY) form an interaction with tRNA region.

Belongs to the MnmA/TRMU family.

Its subcellular location is the cytoplasm. The enzyme catalyses S-sulfanyl-L-cysteinyl-[protein] + uridine(34) in tRNA + AH2 + ATP = 2-thiouridine(34) in tRNA + L-cysteinyl-[protein] + A + AMP + diphosphate + H(+). Its function is as follows. Catalyzes the 2-thiolation of uridine at the wobble position (U34) of tRNA, leading to the formation of s(2)U34. The sequence is that of tRNA-specific 2-thiouridylase MnmA from Thermosynechococcus vestitus (strain NIES-2133 / IAM M-273 / BP-1).